A 113-amino-acid polypeptide reads, in one-letter code: Large ribosomal subunit protein bL19 (113 aa).

Belongs to the bacterial ribosomal protein bL19 family.

Functionally, this protein is located at the 30S-50S ribosomal subunit interface and may play a role in the structure and function of the aminoacyl-tRNA binding site. The protein is Large ribosomal subunit protein bL19 of Corynebacterium diphtheriae (strain ATCC 700971 / NCTC 13129 / Biotype gravis).